The sequence spans 255 residues: Spectinomycin 9-adenylyltransferase (255 aa).

The enzyme catalyses spectinomycin + ATP = 9-O-adenylylspectinomycin + diphosphate. Its function is as follows. Mediates bacterial resistance to the antibiotic spectinomycin but not streptomycin. The chain is Spectinomycin 9-adenylyltransferase from Enterococcus faecalis (Streptococcus faecalis).